The following is a 342-amino-acid chain: Nucleoid-associated protein Shewmr7_2293 (342 aa).

Belongs to the YejK family.

It is found in the cytoplasm. The protein resides in the nucleoid. The chain is Nucleoid-associated protein Shewmr7_2293 from Shewanella sp. (strain MR-7).